The sequence spans 408 residues: Argininosuccinate synthase (408 aa).

ATP is bound by residues 12 to 20 and Ala-39; that span reads AYSGGLDTS. L-citrulline contacts are provided by Tyr-90 and Ser-95. Residue Gly-120 participates in ATP binding. L-aspartate is bound by residues Thr-122, Asn-126, and Asp-127. Asn-126 is a binding site for L-citrulline. Residues Arg-130, Ser-181, Ser-190, Glu-266, and Tyr-278 each contribute to the L-citrulline site.

It belongs to the argininosuccinate synthase family. Type 1 subfamily. In terms of assembly, homotetramer.

The protein localises to the cytoplasm. It catalyses the reaction L-citrulline + L-aspartate + ATP = 2-(N(omega)-L-arginino)succinate + AMP + diphosphate + H(+). It participates in amino-acid biosynthesis; L-arginine biosynthesis; L-arginine from L-ornithine and carbamoyl phosphate: step 2/3. The protein is Argininosuccinate synthase of Methylococcus capsulatus (strain ATCC 33009 / NCIMB 11132 / Bath).